Here is a 191-residue protein sequence, read N- to C-terminus: Lipid A 1-phosphatase (191 aa).

The next 5 membrane-spanning stretches (helical) occupy residues 22-42 (LLALSLGLILLGVFIPFPKVP), 60-80 (FIPTILSVAIPLIQRDAVGLF), 117-137 (GNFNMPSGHSSMVGLAVAFLM), 145-162 (YLWLLPLIPLTMLARIYL), and 164-184 (MHTIGAVLAGLGTGMLCVGLF).

Belongs to the lipid A LpxE 1-phosphatase family.

It localises to the cell inner membrane. Its pathway is bacterial outer membrane biogenesis; LPS lipid A biosynthesis. Removes the 1-phosphate group from tetra- and probably hexaacylated lipid A species. Absence of the 1-phosphate group renders the bacteria partially resistant to host-derived cationic antimicrobial peptides (CAMP), allowing it to camouflage itself from the host innate immune response, and plays a role in the long-term colonization of the host's stomach. This is Lipid A 1-phosphatase from Helicobacter pylori (strain J99 / ATCC 700824) (Campylobacter pylori J99).